We begin with the raw amino-acid sequence, 265 residues long: Expansin-like A2 (265 aa).

The signal sequence occupies residues M1–A21. In terms of domain architecture, Expansin-like EG45 spans S42–K148. Residues N100 and N103 are each glycosylated (N-linked (GlcNAc...) asparagine). The Expansin-like CBD domain maps to N162–A244.

It belongs to the expansin family. Expansin-like A subfamily.

The protein resides in the secreted. This is Expansin-like A2 (EXLA2) from Arabidopsis thaliana (Mouse-ear cress).